Here is a 364-residue protein sequence, read N- to C-terminus: Chaperone protein DnaJ (364 aa).

Residues Asp-4 to Gly-69 form the J domain. The segment at Gly-135–Gln-213 adopts a CR-type zinc-finger fold. Zn(2+)-binding residues include Cys-148, Cys-151, Cys-165, Cys-168, Cys-187, Cys-190, Cys-201, and Cys-204. 4 CXXCXGXG motif repeats span residues Cys-148–Lys-155, Cys-165–Gly-172, Cys-187–Gly-194, and Cys-201–Gly-208.

Belongs to the DnaJ family. In terms of assembly, homodimer. Zn(2+) serves as cofactor.

Its subcellular location is the cytoplasm. Functionally, participates actively in the response to hyperosmotic and heat shock by preventing the aggregation of stress-denatured proteins and by disaggregating proteins, also in an autonomous, DnaK-independent fashion. Unfolded proteins bind initially to DnaJ; upon interaction with the DnaJ-bound protein, DnaK hydrolyzes its bound ATP, resulting in the formation of a stable complex. GrpE releases ADP from DnaK; ATP binding to DnaK triggers the release of the substrate protein, thus completing the reaction cycle. Several rounds of ATP-dependent interactions between DnaJ, DnaK and GrpE are required for fully efficient folding. Also involved, together with DnaK and GrpE, in the DNA replication of plasmids through activation of initiation proteins. The sequence is that of Chaperone protein DnaJ from Borrelia garinii subsp. bavariensis (strain ATCC BAA-2496 / DSM 23469 / PBi) (Borreliella bavariensis).